The sequence spans 349 residues: tRNA pseudouridine synthase D (349 aa).

A substrate-binding site is contributed by Phe-27. Asp-80 serves as the catalytic Nucleophile. Asn-129 serves as a coordination point for substrate. One can recognise a TRUD domain in the interval 155–303 (GVPNYFGAQR…VEAARRAMLL (149 aa)). Phe-329 is a substrate binding site.

Belongs to the pseudouridine synthase TruD family.

The catalysed reaction is uridine(13) in tRNA = pseudouridine(13) in tRNA. Functionally, responsible for synthesis of pseudouridine from uracil-13 in transfer RNAs. This is tRNA pseudouridine synthase D from Escherichia coli O8 (strain IAI1).